Consider the following 187-residue polypeptide: Orotate phosphoribosyltransferase (187 aa).

Residues Arg98, Lys99, Lys102, His104, and 128 to 136 each bind 5-phospho-alpha-D-ribose 1-diphosphate; that span reads EDVTTTGGS. Orotate is bound by residues Thr132 and Arg160.

Belongs to the purine/pyrimidine phosphoribosyltransferase family. PyrE subfamily. As to quaternary structure, homodimer. Mg(2+) is required as a cofactor.

It catalyses the reaction orotidine 5'-phosphate + diphosphate = orotate + 5-phospho-alpha-D-ribose 1-diphosphate. It functions in the pathway pyrimidine metabolism; UMP biosynthesis via de novo pathway; UMP from orotate: step 1/2. Functionally, catalyzes the transfer of a ribosyl phosphate group from 5-phosphoribose 1-diphosphate to orotate, leading to the formation of orotidine monophosphate (OMP). In Rhodopseudomonas palustris (strain BisB18), this protein is Orotate phosphoribosyltransferase.